The following is a 342-amino-acid chain: Oxygen-dependent coproporphyrinogen-III oxidase (342 aa).

Substrate is bound at residue S98. H102 and H112 together coordinate a divalent metal cation. H112 (proton donor) is an active-site residue. 114-116 (NYR) contributes to the substrate binding site. A divalent metal cation-binding residues include H146 and H176. The important for dimerization stretch occupies residues 266–301 (YVEFNLVWDRGTIFGLQTNGRTESILMSLPPLARWE).

It belongs to the aerobic coproporphyrinogen-III oxidase family. In terms of assembly, homodimer. A divalent metal cation is required as a cofactor.

Its subcellular location is the cytoplasm. The catalysed reaction is coproporphyrinogen III + O2 + 2 H(+) = protoporphyrinogen IX + 2 CO2 + 2 H2O. It functions in the pathway porphyrin-containing compound metabolism; protoporphyrin-IX biosynthesis; protoporphyrinogen-IX from coproporphyrinogen-III (O2 route): step 1/1. Involved in the heme and chlorophyll biosynthesis. Catalyzes the aerobic oxidative decarboxylation of propionate groups of rings A and B of coproporphyrinogen-III to yield the vinyl groups in protoporphyrinogen-IX. The sequence is that of Oxygen-dependent coproporphyrinogen-III oxidase from Prochlorococcus marinus (strain AS9601).